The primary structure comprises 443 residues: Threonine/serine transporter TdcC (443 aa).

Helical transmembrane passes span Trp-24 to Ala-44, Gly-45 to Phe-65, Val-95 to Tyr-115, Val-140 to Met-160, Val-163 to Ile-183, Ile-207 to Ile-227, Ala-259 to Ser-279, Ala-319 to Leu-339, Leu-363 to Pro-383, Ile-385 to Pro-405, and Ser-423 to Met-443.

Belongs to the amino acid/polyamine transporter 2 family. SdaC/TdcC subfamily.

The protein resides in the cell inner membrane. The catalysed reaction is L-threonine(in) + H(+)(in) = L-threonine(out) + H(+)(out). The enzyme catalyses L-serine(in) + H(+)(in) = L-serine(out) + H(+)(out). Its function is as follows. Involved in the import of threonine and serine into the cell, with the concomitant import of a proton (symport system). The protein is Threonine/serine transporter TdcC of Edwardsiella piscicida.